A 301-amino-acid polypeptide reads, in one-letter code: Mitochondrial ornithine transporter 1 (301 aa).

A run of 6 helical transmembrane segments spans residues 5 to 25, 68 to 88, 110 to 130, 168 to 188, 207 to 227, and 237 to 257; these read PAIQ…ACVL, SPAL…YGFC, AAAG…TELV, GFYH…FFFF, LGPV…WLAV, and IQVL…LSIV. Solcar repeat units follow at residues 7-91, 104-197, and 207-293; these read IQAA…CQQV, LSDL…SRSF, and LGPV…SRKL.

It belongs to the mitochondrial carrier (TC 2.A.29) family. In terms of tissue distribution, widely expressed, with highest levels in the liver, testis and kidney. In the brain, expressed at high levels in the hypothalamus.

It localises to the mitochondrion inner membrane. It is found in the mitochondrion membrane. The catalysed reaction is L-citrulline(in) + L-ornithine(out) + H(+)(in) = L-citrulline(out) + L-ornithine(in) + H(+)(out). The enzyme catalyses L-ornithine(in) + L-arginine(out) = L-ornithine(out) + L-arginine(in). It catalyses the reaction L-ornithine(out) + L-lysine(in) = L-ornithine(in) + L-lysine(out). It carries out the reaction L-lysine(out) + H(+)(in) = L-lysine(in) + H(+)(out). The catalysed reaction is L-ornithine(out) + H(+)(in) = L-ornithine(in) + H(+)(out). Its activity is regulated as follows. Inhibited by pyridoxal 5'-phosphate as well as by mercurials (mersalyl, p-chloromercuribenzene sulfonate, and mercuric chloride), N-ethylmaleimide and spermine. In terms of biological role, mitochondrial ornithine-citrulline antiporter. Catalyzes the exchange between cytosolic ornithine and mitochondrial citrulline plus an H(+), the proton compensates the positive charge of ornithine thus leading to an electroneutral transport. Plays a crucial role in the urea cycle, by connecting the cytosolic and the intramitochondrial reactions of the urea cycle. Lysine and arginine are also transported by the antiport mechanism. In addition, catalyzes an electroneutral exchange of ornithine or lysine for H(+), a reaction driven by the pH gradient across the inner membrane. The sequence is that of Mitochondrial ornithine transporter 1 from Mus musculus (Mouse).